The primary structure comprises 265 residues: Tryptophan synthase alpha chain (265 aa).

Catalysis depends on proton acceptor residues E45 and D56.

The protein belongs to the TrpA family. As to quaternary structure, tetramer of two alpha and two beta chains.

It catalyses the reaction (1S,2R)-1-C-(indol-3-yl)glycerol 3-phosphate + L-serine = D-glyceraldehyde 3-phosphate + L-tryptophan + H2O. It participates in amino-acid biosynthesis; L-tryptophan biosynthesis; L-tryptophan from chorismate: step 5/5. The alpha subunit is responsible for the aldol cleavage of indoleglycerol phosphate to indole and glyceraldehyde 3-phosphate. The sequence is that of Tryptophan synthase alpha chain from Halalkalibacterium halodurans (strain ATCC BAA-125 / DSM 18197 / FERM 7344 / JCM 9153 / C-125) (Bacillus halodurans).